The primary structure comprises 346 residues: Phenylalanine--tRNA ligase alpha subunit (346 aa).

Glu260 serves as a coordination point for Mg(2+).

The protein belongs to the class-II aminoacyl-tRNA synthetase family. Phe-tRNA synthetase alpha subunit type 1 subfamily. In terms of assembly, tetramer of two alpha and two beta subunits. Mg(2+) serves as cofactor.

The protein resides in the cytoplasm. The enzyme catalyses tRNA(Phe) + L-phenylalanine + ATP = L-phenylalanyl-tRNA(Phe) + AMP + diphosphate + H(+). This chain is Phenylalanine--tRNA ligase alpha subunit, found in Herpetosiphon aurantiacus (strain ATCC 23779 / DSM 785 / 114-95).